Consider the following 208-residue polypeptide: Histone 24 (208 aa).

N-acetylserine is present on S2. Residue K14 is modified to N6-methyllysine. Residues 37–113 (AHPPYINMIK…GANGRFRVPE (77 aa)) form the H15 domain. Residues 101–208 (AGSGANGRFR…KKAAKPAAKA (108 aa)) form a disordered region. A compositionally biased stretch (low complexity) spans 114–138 (KAAAAKKPAAAKKPAAAKKPAAAKK). Basic residues-rich tracts occupy residues 144–155 (KAKKPAAAKPKK) and 162–202 (KVKK…KKAA).

It belongs to the histone H1/H5 family. In terms of assembly, interacts with nmad-1. Interacts (when monomethylated at Lys-14) with chromobox protein homolog hpl-1; the interaction is direct. Interacts (when monomethylated at Lys-14) with histone H3 (when trimethylated on 'Lys-27'); the interaction is direct. In terms of processing, methylation at lysine 14 is necessary to regulate male tail development.

The protein resides in the nucleus. It localises to the chromosome. The protein localises to the cytoplasm. In terms of biological role, histones H1 are necessary for the condensation of nucleosome chains into higher-order structures. Probably does not act as global transcriptional repressor. Acting in concert with chromobox protein homologs hpl-1 and hpl-2, involved in reproduction, somatic gonad development, male tail development, and vulval cell fate decisions; perhaps as a result of modulating expression of Hox genes mab-5 and egl-5. Plays a role in linking epigenetic regulation with the innate immune response. This Caenorhabditis elegans protein is Histone 24.